The chain runs to 239 residues: 1-(5-phosphoribosyl)-5-[(5-phosphoribosylamino)methylideneamino] imidazole-4-carboxamide isomerase (239 aa).

The active-site Proton acceptor is the Asp8. Asp129 (proton donor) is an active-site residue.

The protein belongs to the HisA/HisF family.

The protein resides in the cytoplasm. The enzyme catalyses 1-(5-phospho-beta-D-ribosyl)-5-[(5-phospho-beta-D-ribosylamino)methylideneamino]imidazole-4-carboxamide = 5-[(5-phospho-1-deoxy-D-ribulos-1-ylimino)methylamino]-1-(5-phospho-beta-D-ribosyl)imidazole-4-carboxamide. The protein operates within amino-acid biosynthesis; L-histidine biosynthesis; L-histidine from 5-phospho-alpha-D-ribose 1-diphosphate: step 4/9. The protein is 1-(5-phosphoribosyl)-5-[(5-phosphoribosylamino)methylideneamino] imidazole-4-carboxamide isomerase of Legionella pneumophila subsp. pneumophila (strain Philadelphia 1 / ATCC 33152 / DSM 7513).